Reading from the N-terminus, the 167-residue chain is Disulfide bond formation protein B (167 aa).

Over 1–12 (MFLNLLDAPRRL) the chain is Cytoplasmic. A helical membrane pass occupies residues 13–29 (LALVALGCVALLAFGLY). Topologically, residues 30–47 (LQHVVGLEPCPMCIVQRY) are periplasmic. Residues Cys39 and Cys42 are joined by a disulfide bond. A helical membrane pass occupies residues 48–63 (ALVLVAIVAGLTAITS). At 64–69 (NKKGLI) the chain is on the cytoplasmic side. Residues 70–87 (TGSGVLLLLAGFGAFVAA) form a helical membrane-spanning segment. Topologically, residues 88–143 (RQSFLQWYPPEVASCGRDFYGMIETFPLQRAIPMIFKGSGDCAKVDWTFLGGSIAN) are periplasmic. Cysteines 102 and 129 form a disulfide. The chain crosses the membrane as a helical span at residues 144–162 (WSFVCFAVIGLTALTLIAR). The Cytoplasmic segment spans residues 163 to 167 (LARQR).

It belongs to the DsbB family.

Its subcellular location is the cell inner membrane. Required for disulfide bond formation in some periplasmic proteins. Acts by oxidizing the DsbA protein. This is Disulfide bond formation protein B from Polaromonas naphthalenivorans (strain CJ2).